The sequence spans 239 residues: O-methyltransferase ankF (239 aa).

S-adenosyl-L-methionine contacts are provided by residues Glu71, 73–74 (GT), Ser79, Glu98, and Ala127.

It belongs to the class I-like SAM-binding methyltransferase superfamily. Cation-dependent O-methyltransferase family.

It catalyses the reaction NK13650 B + S-adenosyl-L-methionine = NK13650 D + S-adenosyl-L-homocysteine + H(+). Its pathway is secondary metabolite biosynthesis. O-methyltransferase; part of the ank cluster that mediates the biosynthesis of NK13650 C, a highly modified cyclo-arginine-tyrosine dipeptide. AnkF converts NK13650 B to produce NK13650 D via methylation of the C-17 phenol group. Within the pathway, the cyclodipeptide synthase ankA acts as the scaffold-generating enzyme and is responsible for formation of the cyclo-Arg-Tyr diketopiperazine (cRY) from L-Arg and L-Tyr. The ankA product cRY is desaturated by the cytochrome P450 monooxygenase ankB to yield a dehydro-cyclodipeptide intermediate. The FAD-dependent monooxygenase ankC then installs the m-OH, ankD catalyzes the attachment of L-homoserine, and ankE ligates citrate to the ankD product to yield NK13650 B. The O-methyltransferase ankF is responsible for methylation of the C-17 phenol group of NK13650 B to produce NK13650 D. Amidation of NK13650 D with L-Asp by ankG then leads to the production of NK13650 C, whereas amidation of NK13650 B produces NK13650 A. This Aspergillus thermomutatus (Neosartorya pseudofischeri) protein is O-methyltransferase ankF.